A 256-amino-acid chain; its full sequence is ATP synthase peripheral stalk subunit b, mitochondrial (256 aa).

The N-terminal 42 residues, 1–42 (MLSRVVLSAAATAASSLKNAAFLGPGVLQATRTFHTGQPHLA), are a transit peptide targeting the mitochondrion. N6-succinyllysine is present on Lys131. 6 positions are modified to N6-acetyllysine: Lys139, Lys154, Lys162, Lys221, Lys233, and Lys244.

Belongs to the eukaryotic ATPase B chain family. In terms of assembly, component of the ATP synthase complex composed at least of ATP5F1A/subunit alpha, ATP5F1B/subunit beta, ATP5MC1/subunit c (homooctomer), MT-ATP6/subunit a, MT-ATP8/subunit 8, ATP5ME/subunit e, ATP5MF/subunit f, ATP5MG/subunit g, ATP5MK/subunit k, ATP5MJ/subunit j, ATP5F1C/subunit gamma, ATP5F1D/subunit delta, ATP5F1E/subunit epsilon, ATP5PF/subunit F6, ATP5PB/subunit b, ATP5PD/subunit d, ATP5PO/subunit OSCP. ATP synthase complex consists of a soluble F(1) head domain (subunits alpha(3) and beta(3)) - the catalytic core - and a membrane F(0) domain - the membrane proton channel (subunits c, a, 8, e, f, g, k and j). These two domains are linked by a central stalk (subunits gamma, delta, and epsilon) rotating inside the F1 region and a stationary peripheral stalk (subunits F6, b, d, and OSCP).

The protein resides in the mitochondrion. It localises to the mitochondrion inner membrane. In terms of biological role, subunit b, of the mitochondrial membrane ATP synthase complex (F(1)F(0) ATP synthase or Complex V) that produces ATP from ADP in the presence of a proton gradient across the membrane which is generated by electron transport complexes of the respiratory chain. ATP synthase complex consist of a soluble F(1) head domain - the catalytic core - and a membrane F(1) domain - the membrane proton channel. These two domains are linked by a central stalk rotating inside the F(1) region and a stationary peripheral stalk. During catalysis, ATP synthesis in the catalytic domain of F(1) is coupled via a rotary mechanism of the central stalk subunits to proton translocation. In vivo, can only synthesize ATP although its ATP hydrolase activity can be activated artificially in vitro. Part of the complex F(0) domain. Part of the complex F(0) domain and the peripheric stalk, which acts as a stator to hold the catalytic alpha(3)beta(3) subcomplex and subunit a/ATP6 static relative to the rotary elements. The protein is ATP synthase peripheral stalk subunit b, mitochondrial of Pongo abelii (Sumatran orangutan).